Here is a 94-residue protein sequence, read N- to C-terminus: Transcription factor CPC (94 aa).

An S1, required for cell-to-cell movements region spans residues 1 to 10 (MFRSDKAEKM). The span at 1-11 (MFRSDKAEKMD) shows a compositional bias: basic and acidic residues. The tract at residues 1–25 (MFRSDKAEKMDKRRRRQSKAKASCS) is disordered. One can recognise a Myb-like domain in the interval 30-80 (SIEWEAVKMSEEEEDLISRMYKLVGDRWELIAGRIPGRTPEEIERYWLMKH). The segment at 76–79 (WLMK) is S2, required for cell-to-cell movements and nuclear localization.

In terms of assembly, interacts with GL3 and BHLH2. Interacts with SIEL. Expressed in trichomes and in young developing leaves, as well as in root hair and stele cells (pericycle and vascular tissues). Expressed in epidermal root hairless cells (atrichoblasts) and moves to root hair cells (trichoblasts) by a cell-to-cell movement through plasmodesmata (at protein level).

Its subcellular location is the nucleus. Transcription factor. Determines the fate of epidermal cell differentiation. Represses trichome development by lateral inhibition. Together with GL3 or BHLH2, promotes the formation of hair developing cells (H position) in root epidermis, probably by inhibiting non-hair cell formation. Represses the expression of GL2 and WER in H cells. Positively regulates stomatal formation in the hypocotyl. This is Transcription factor CPC (CPC) from Arabidopsis thaliana (Mouse-ear cress).